Consider the following 130-residue polypeptide: Histone H2A.2 (130 aa).

An N6-acetyllysine mark is found at lysine 4 and lysine 6. The residue at position 104 (glutamine 104) is an N5-methylglutamine. A Glycyl lysine isopeptide (Lys-Gly) (interchain with G-Cter in SUMO) cross-link involves residue lysine 125. Serine 127 is subject to Phosphoserine. A [ST]-Q motif motif is present at residues serine 127–glutamine 128.

Belongs to the histone H2A family. In terms of assembly, the nucleosome is a histone octamer containing two molecules each of H2A, H2B, H3 and H4 assembled in one H3-H4 heterotetramer and two H2A-H2B heterodimers. The octamer wraps approximately 147 bp of DNA. Phosphorylated to form H2AS128ph (gamma-H2A) in response to DNA double-strand breaks (DSBs) generated by exogenous genotoxic agents and by stalled replication forks. Phosphorylation is dependent on the DNA damage checkpoint kinases MEC1/ATR and TEL1/ATM, spreads on either side of a detected DSB site and may mark the surrounding chromatin for recruitment of proteins required for DNA damage signaling and repair. Gamma-H2A is removed from the DNA prior to the strand invasion-primer extension step of the repair process and subsequently dephosphorylated. Dephosphorylation is necessary for efficient recovery from the DNA damage checkpoint. Post-translationally, acetylated by ESA1 to form H2AK4ac and H2AK7ac.

Its subcellular location is the nucleus. It localises to the chromosome. In terms of biological role, core component of nucleosome which plays a central role in DNA double strand break (DSB) repair. Nucleosomes wrap and compact DNA into chromatin, limiting DNA accessibility to the cellular machineries which require DNA as a template. Histones thereby play a central role in transcription regulation, DNA repair, DNA replication and chromosomal stability. DNA accessibility is regulated via a complex set of post-translational modifications of histones, also called histone code, and nucleosome remodeling. This chain is Histone H2A.2 (HTA2), found in Meyerozyma guilliermondii (strain ATCC 6260 / CBS 566 / DSM 6381 / JCM 1539 / NBRC 10279 / NRRL Y-324) (Yeast).